The sequence spans 512 residues: Serine/threonine-protein kinase SSN3 (512 aa).

Disordered stretches follow at residues 1–22 and 75–94; these read MNNH…DRPW and AEVS…TGSM. The region spanning 106-455 is the Protein kinase domain; sequence YKVVGFISSG…AAAALQHPFF (350 aa). ATP-binding positions include 112-120 and lysine 136; that span reads ISSGTYGRV. Catalysis depends on aspartate 238, which acts as the Proton acceptor. Disordered regions lie at residues 368–388 and 476–512; these read QPPI…RQAA and RRVS…VKEG. The span at 373–382 shows a compositional bias: basic residues; it reads HGGHHGHHYQ. Composition is skewed to basic and acidic residues over residues 476–485 and 497–512; these read RRVSQDDNDI and GLPD…VKEG.

This sequence belongs to the protein kinase superfamily. CMGC Ser/Thr protein kinase family. CDC2/CDKX subfamily. As to quaternary structure, component of the SRB8-11 complex, a regulatory module of the Mediator complex. It depends on Mg(2+) as a cofactor.

Its subcellular location is the nucleus. It catalyses the reaction L-seryl-[protein] + ATP = O-phospho-L-seryl-[protein] + ADP + H(+). The catalysed reaction is L-threonyl-[protein] + ATP = O-phospho-L-threonyl-[protein] + ADP + H(+). It carries out the reaction [DNA-directed RNA polymerase] + ATP = phospho-[DNA-directed RNA polymerase] + ADP + H(+). Its function is as follows. Component of the SRB8-11 complex. The SRB8-11 complex is a regulatory module of the Mediator complex which is itself involved in regulation of basal and activated RNA polymerase II-dependent transcription. The SRB8-11 complex may be involved in the transcriptional repression of a subset of genes regulated by Mediator. It may inhibit the association of the Mediator complex with RNA polymerase II to form the holoenzyme complex. The SRB8-11 complex phosphorylates the C-terminal domain (CTD) of the largest subunit of RNA polymerase II. In Chaetomium globosum (strain ATCC 6205 / CBS 148.51 / DSM 1962 / NBRC 6347 / NRRL 1970) (Soil fungus), this protein is Serine/threonine-protein kinase SSN3 (SSN3).